Consider the following 554-residue polypeptide: Probable oligo-1,6-glucosidase 3 (554 aa).

Aspartate 199 acts as the Nucleophile in catalysis. Glutamate 256 serves as the catalytic Proton donor.

Belongs to the glycosyl hydrolase 13 family.

It is found in the cytoplasm. The catalysed reaction is Hydrolysis of (1-&gt;6)-alpha-D-glucosidic linkages in some oligosaccharides produced from starch and glycogen by alpha-amylase, and in isomaltose.. This Bacillus subtilis (strain 168) protein is Probable oligo-1,6-glucosidase 3 (yugT).